A 914-amino-acid polypeptide reads, in one-letter code: DNA mismatch repair protein MutS (914 aa).

The interval Asn-28 to Glu-74 is disordered. Residue Gly-726–Ser-733 coordinates ATP.

It belongs to the DNA mismatch repair MutS family.

In terms of biological role, this protein is involved in the repair of mismatches in DNA. It is possible that it carries out the mismatch recognition step. This protein has a weak ATPase activity. The chain is DNA mismatch repair protein MutS from Prochlorococcus marinus (strain SARG / CCMP1375 / SS120).